A 499-amino-acid polypeptide reads, in one-letter code: Maturase K (499 aa).

This sequence belongs to the intron maturase 2 family. MatK subfamily.

Its subcellular location is the plastid. It localises to the chloroplast. Functionally, usually encoded in the trnK tRNA gene intron. Probably assists in splicing its own and other chloroplast group II introns. In Camellia sinensis (Tea plant), this protein is Maturase K.